The sequence spans 351 residues: Gene 58 protein (351 aa).

A run of 11 helical transmembrane segments spans residues 14-34 (FSTG…ATVF), 43-63 (QSVL…FCAV), 70-90 (LGLL…SWSL), 97-117 (LVPG…IVCF), 133-153 (LGFL…IYLT), 155-175 (VMFA…SHVW), 214-234 (LICL…LVMF), 240-260 (GVST…SLII), 268-288 (AVYS…GYLF), 293-313 (LSML…CLLY), and 328-348 (FILN…LLAQ).

It belongs to the herpesviridae BMRF2 family.

The protein localises to the host membrane. This Connochaetes taurinus (Blue wildebeest) protein is Gene 58 protein (58).